A 106-amino-acid polypeptide reads, in one-letter code: Putative cytochrome c oxidase subunit 7A3, mitochondrial (106 aa).

The N-terminal 23 residues, 1 to 23 (MLWNLLALHQIGQRTISTASHRH), are a transit peptide targeting the mitochondrion.

The protein belongs to the cytochrome c oxidase VIIa family.

The protein localises to the mitochondrion inner membrane. This is Putative cytochrome c oxidase subunit 7A3, mitochondrial (COX7A2P2) from Homo sapiens (Human).